Here is a 368-residue protein sequence, read N- to C-terminus: Phospho-N-acetylmuramoyl-pentapeptide-transferase (368 aa).

Helical transmembrane passes span 30 to 50, 72 to 92, 99 to 119, 135 to 155, 170 to 190, 201 to 221, 238 to 258, 265 to 286, and 345 to 365; these read AAAI…IAYL, LPTM…FLWA, VWLV…DDYL, LIGQ…DPSM, LTIN…TAIS, GLAA…AYLA, GGEV…FLWF, IIMG…ALLI, and KIVI…LMTL.

The protein belongs to the glycosyltransferase 4 family. MraY subfamily. It depends on Mg(2+) as a cofactor.

The protein localises to the cell inner membrane. The enzyme catalyses UDP-N-acetyl-alpha-D-muramoyl-L-alanyl-gamma-D-glutamyl-meso-2,6-diaminopimeloyl-D-alanyl-D-alanine + di-trans,octa-cis-undecaprenyl phosphate = di-trans,octa-cis-undecaprenyl diphospho-N-acetyl-alpha-D-muramoyl-L-alanyl-D-glutamyl-meso-2,6-diaminopimeloyl-D-alanyl-D-alanine + UMP. The protein operates within cell wall biogenesis; peptidoglycan biosynthesis. Functionally, catalyzes the initial step of the lipid cycle reactions in the biosynthesis of the cell wall peptidoglycan: transfers peptidoglycan precursor phospho-MurNAc-pentapeptide from UDP-MurNAc-pentapeptide onto the lipid carrier undecaprenyl phosphate, yielding undecaprenyl-pyrophosphoryl-MurNAc-pentapeptide, known as lipid I. In Chlorobium chlorochromatii (strain CaD3), this protein is Phospho-N-acetylmuramoyl-pentapeptide-transferase.